A 295-amino-acid chain; its full sequence is Cytidine deaminase (295 aa).

CMP/dCMP-type deaminase domains lie at 48–168 and 187–295; these read SDKE…FGPA and DDKD…FVNV. 89-91 provides a ligand contact to substrate; it reads NME. Position 102 (His102) interacts with Zn(2+). The active-site Proton donor is the Glu104. Zn(2+) is bound by residues Cys129 and Cys132.

Belongs to the cytidine and deoxycytidylate deaminase family. As to quaternary structure, homodimer. Zn(2+) is required as a cofactor.

The enzyme catalyses cytidine + H2O + H(+) = uridine + NH4(+). It carries out the reaction 2'-deoxycytidine + H2O + H(+) = 2'-deoxyuridine + NH4(+). Functionally, this enzyme scavenges exogenous and endogenous cytidine and 2'-deoxycytidine for UMP synthesis. This chain is Cytidine deaminase, found in Vibrio parahaemolyticus serotype O3:K6 (strain RIMD 2210633).